Consider the following 113-residue polypeptide: Transcriptional activator RamA (113 aa).

The 99-residue stretch at 9 to 107 (DTIVEWIDDN…HQPPGAYRKE (99 aa)) folds into the HTH araC/xylS-type domain. 2 consecutive DNA-binding regions (H-T-H motif) follow at residues 26–47 (EDIA…LQYK) and 74–97 (VYEI…TRTF).

Probable transcriptional activator. This Enterobacter cloacae protein is Transcriptional activator RamA (ramA).